A 120-amino-acid polypeptide reads, in one-letter code: NAD(P)H-quinone oxidoreductase subunit 3, chloroplastic (120 aa).

Transmembrane regions (helical) follow at residues 9-29 (IFWA…LISG), 64-84 (MFAL…PWAM), and 88-108 (VLGV…IVGS).

The protein belongs to the complex I subunit 3 family. As to quaternary structure, NDH is composed of at least 16 different subunits, 5 of which are encoded in the nucleus.

It is found in the plastid. The protein localises to the chloroplast thylakoid membrane. The enzyme catalyses a plastoquinone + NADH + (n+1) H(+)(in) = a plastoquinol + NAD(+) + n H(+)(out). It carries out the reaction a plastoquinone + NADPH + (n+1) H(+)(in) = a plastoquinol + NADP(+) + n H(+)(out). Its function is as follows. NDH shuttles electrons from NAD(P)H:plastoquinone, via FMN and iron-sulfur (Fe-S) centers, to quinones in the photosynthetic chain and possibly in a chloroplast respiratory chain. The immediate electron acceptor for the enzyme in this species is believed to be plastoquinone. Couples the redox reaction to proton translocation, and thus conserves the redox energy in a proton gradient. The chain is NAD(P)H-quinone oxidoreductase subunit 3, chloroplastic from Gossypium barbadense (Sea Island cotton).